The primary structure comprises 304 residues: Dermonecrotic toxin LiSicTox-betaIA1i (304 aa).

Residues 1–21 (MLLPAVISFIVYAVFLQEANG) form the signal peptide. Positions 22 to 26 (HAAER) are excised as a propeptide. The active site involves histidine 38. Residues glutamate 58 and aspartate 60 each contribute to the Mg(2+) site. The Nucleophile role is filled by histidine 74. 2 disulfides stabilise this stretch: cysteine 78–cysteine 84 and cysteine 80–cysteine 223. Residue aspartate 118 participates in Mg(2+) binding.

This sequence belongs to the arthropod phospholipase D family. Class II subfamily. Class IIb sub-subfamily. The cofactor is Mg(2+). Expressed by the venom gland.

It localises to the secreted. It carries out the reaction an N-(acyl)-sphingosylphosphocholine = an N-(acyl)-sphingosyl-1,3-cyclic phosphate + choline. It catalyses the reaction an N-(acyl)-sphingosylphosphoethanolamine = an N-(acyl)-sphingosyl-1,3-cyclic phosphate + ethanolamine. The catalysed reaction is a 1-acyl-sn-glycero-3-phosphocholine = a 1-acyl-sn-glycero-2,3-cyclic phosphate + choline. The enzyme catalyses a 1-acyl-sn-glycero-3-phosphoethanolamine = a 1-acyl-sn-glycero-2,3-cyclic phosphate + ethanolamine. Functionally, dermonecrotic toxins cleave the phosphodiester linkage between the phosphate and headgroup of certain phospholipids (sphingolipid and lysolipid substrates), forming an alcohol (often choline) and a cyclic phosphate. This toxin acts on sphingomyelin (SM) with low activity. It may also act on ceramide phosphoethanolamine (CPE), lysophosphatidylcholine (LPC) and lysophosphatidylethanolamine (LPE), but not on lysophosphatidylserine (LPS), and lysophosphatidylglycerol (LPG). It acts by transphosphatidylation, releasing exclusively cyclic phosphate products as second products. Induces inflammatory response but no or very weak hemolysis, dermonecrosis, vascular permeability, edema, and cytotoxicity against renal epithelial cells. Causes swelling and erythema. In vivo, is not lethal to mice when intraperitoneally injected. In Loxosceles intermedia (Brown spider), this protein is Dermonecrotic toxin LiSicTox-betaIA1i.